We begin with the raw amino-acid sequence, 485 residues long: Shutoff alkaline exonuclease (485 aa).

It belongs to the herpesviridae alkaline nuclease family. As to quaternary structure, forms a complex with the DNA polymerase, the DNA polymerase processivity factor, and the major DNA binding protein.

It localises to the host nucleus. The protein localises to the host cytoplasm. In terms of biological role, plays a role in processing non linear or branched viral DNA intermediates in order to promote the production of mature packaged unit-length linear progeny viral DNA molecules. Exhibits endonuclease and exonuclease activities and accepts both double-stranded and single-stranded DNA as substrate. Exonuclease digestion of DNA is in the 5'-&gt; 3' direction and the products are 5'-monophosphate nucleosides. Additionally, forms a recombinase with the major DNA-binding protein, which displays strand exchange activity. Also acts as a cytoplasmic RNA endonuclease that induces degradation of the majority of the cellular messenger RNAs during early lytic infection. The resulting inhibition of cellular protein synthesis serves to ensure maximal viral gene expression and evasion from host immune response. Internally cleaves host mRNAs which are then degraded by the cellular exonuclease XRN1. Bypasses therefore the regulatory steps of deadenylation and decapping normally required for XRN1 activation. The sequence is that of Shutoff alkaline exonuclease (37) from Alcelaphine herpesvirus 1 (strain C500) (AlHV-1).